Consider the following 335-residue polypeptide: Teichoic acids export ATP-binding protein TagH (335 aa).

The region spanning 26–246 (IKGLFMPKSQ…YDEFVKWFNK (221 aa)) is the ABC transporter domain. 60-67 (GINGSGKS) contacts ATP.

The protein belongs to the ABC transporter superfamily. Teichoic acids exporter (TC 3.A.1.104.1) family. As to quaternary structure, the complex is composed of two ATP-binding proteins (TagH) and two transmembrane proteins (TagG).

It is found in the cell membrane. It carries out the reaction ATP + H2O + teichoic acidSide 1 = ADP + phosphate + teichoic acidSide 2.. Part of the ABC transporter complex TagGH involved in teichoic acids export. Responsible for energy coupling to the transport system. This is Teichoic acids export ATP-binding protein TagH from Listeria monocytogenes serotype 4b (strain F2365).